The primary structure comprises 201 residues: tRNA (guanine-N(7)-)-methyltransferase (201 aa).

Positions 33, 58, 85, and 106 each coordinate S-adenosyl-L-methionine. D106 is an active-site residue. Substrate is bound by residues K110, D142, and 180-183; that span reads TTYE.

The protein belongs to the class I-like SAM-binding methyltransferase superfamily. TrmB family.

It catalyses the reaction guanosine(46) in tRNA + S-adenosyl-L-methionine = N(7)-methylguanosine(46) in tRNA + S-adenosyl-L-homocysteine. The protein operates within tRNA modification; N(7)-methylguanine-tRNA biosynthesis. In terms of biological role, catalyzes the formation of N(7)-methylguanine at position 46 (m7G46) in tRNA. This chain is tRNA (guanine-N(7)-)-methyltransferase, found in Mesomycoplasma hyopneumoniae (strain 7448) (Mycoplasma hyopneumoniae).